We begin with the raw amino-acid sequence, 361 residues long: Chorismate synthase (361 aa).

NADP(+)-binding residues include Arg-48 and Arg-54. FMN-binding positions include 125-127, 238-239, Gly-278, 293-297, and Arg-319; these read RSS, NA, and KPTSS.

The protein belongs to the chorismate synthase family. As to quaternary structure, homotetramer. Requires FMNH2 as cofactor.

It catalyses the reaction 5-O-(1-carboxyvinyl)-3-phosphoshikimate = chorismate + phosphate. Its pathway is metabolic intermediate biosynthesis; chorismate biosynthesis; chorismate from D-erythrose 4-phosphate and phosphoenolpyruvate: step 7/7. Its function is as follows. Catalyzes the anti-1,4-elimination of the C-3 phosphate and the C-6 proR hydrogen from 5-enolpyruvylshikimate-3-phosphate (EPSP) to yield chorismate, which is the branch point compound that serves as the starting substrate for the three terminal pathways of aromatic amino acid biosynthesis. This reaction introduces a second double bond into the aromatic ring system. This is Chorismate synthase from Escherichia coli O157:H7.